A 671-amino-acid chain; its full sequence is DNA ligase (671 aa).

NAD(+)-binding positions include 32–36 (DAEYD), 81–82 (SL), and E113. K115 acts as the N6-AMP-lysine intermediate in catalysis. R136, E173, K290, and K314 together coordinate NAD(+). 4 residues coordinate Zn(2+): C408, C411, C426, and C432. The 79-residue stretch at 593–671 (EIDSPFAGKT…EAEMMRLLGE (79 aa)) folds into the BRCT domain.

The protein belongs to the NAD-dependent DNA ligase family. LigA subfamily. The cofactor is Mg(2+). Mn(2+) serves as cofactor.

The enzyme catalyses NAD(+) + (deoxyribonucleotide)n-3'-hydroxyl + 5'-phospho-(deoxyribonucleotide)m = (deoxyribonucleotide)n+m + AMP + beta-nicotinamide D-nucleotide.. DNA ligase that catalyzes the formation of phosphodiester linkages between 5'-phosphoryl and 3'-hydroxyl groups in double-stranded DNA using NAD as a coenzyme and as the energy source for the reaction. It is essential for DNA replication and repair of damaged DNA. The chain is DNA ligase from Klebsiella pneumoniae subsp. pneumoniae (strain ATCC 700721 / MGH 78578).